Reading from the N-terminus, the 817-residue chain is Leucine--tRNA ligase (817 aa).

The 'HIGH' region motif lies at 42-52; the sequence is PYPSGKLHMGH. Residues 576 to 580 carry the 'KMSKS' region motif; the sequence is KMSKS. Lysine 579 serves as a coordination point for ATP.

It belongs to the class-I aminoacyl-tRNA synthetase family.

The protein resides in the cytoplasm. It carries out the reaction tRNA(Leu) + L-leucine + ATP = L-leucyl-tRNA(Leu) + AMP + diphosphate. The polypeptide is Leucine--tRNA ligase (Methylobacillus flagellatus (strain ATCC 51484 / DSM 6875 / VKM B-1610 / KT)).